Consider the following 365-residue polypeptide: Cobalt-precorrin-5B C(1)-methyltransferase (365 aa).

The protein belongs to the CbiD family.

It catalyses the reaction Co-precorrin-5B + S-adenosyl-L-methionine = Co-precorrin-6A + S-adenosyl-L-homocysteine. The protein operates within cofactor biosynthesis; adenosylcobalamin biosynthesis; cob(II)yrinate a,c-diamide from sirohydrochlorin (anaerobic route): step 6/10. Its function is as follows. Catalyzes the methylation of C-1 in cobalt-precorrin-5B to form cobalt-precorrin-6A. The chain is Cobalt-precorrin-5B C(1)-methyltransferase from Pseudomonas fluorescens (strain ATCC BAA-477 / NRRL B-23932 / Pf-5).